The chain runs to 142 residues: Hemoglobin A subunit alpha-2 (142 aa).

The Globin domain maps to 2–142 (VLTAGDKANV…VAQNLTSKYR (141 aa)). Position 59 (H59) interacts with O2. H88 provides a ligand contact to heme b.

This sequence belongs to the globin family. As to quaternary structure, tetramer of alpha-1, alpha-2 and two identical beta chains. In terms of tissue distribution, red blood cells.

Functionally, involved in oxygen transport from the lung to the various peripheral tissues. The protein is Hemoglobin A subunit alpha-2 of Aldabrachelys gigantea (Aldabra giant tortoise).